Here is a 378-residue protein sequence, read N- to C-terminus: Chaperone protein DnaJ (378 aa).

Residues 3-67 form the J domain; the sequence is DFYDTLGVNR…EKRARYDQFG (65 aa). The CR-type zinc-finger motif lies at 132–214; it reads GQEREIKIPH…CGGQGVKQVR (83 aa). Residues Cys145, Cys148, Cys162, Cys165, Cys188, Cys191, Cys202, and Cys205 each contribute to the Zn(2+) site. 4 CXXCXGXG motif repeats span residues 145–152, 162–169, 188–195, and 202–209; these read CDVCRGTG, CSTCGGAG, CPTCSGSG, and CQSCGGQG.

It belongs to the DnaJ family. As to quaternary structure, homodimer. It depends on Zn(2+) as a cofactor.

The protein localises to the cytoplasm. Its function is as follows. Participates actively in the response to hyperosmotic and heat shock by preventing the aggregation of stress-denatured proteins and by disaggregating proteins, also in an autonomous, DnaK-independent fashion. Unfolded proteins bind initially to DnaJ; upon interaction with the DnaJ-bound protein, DnaK hydrolyzes its bound ATP, resulting in the formation of a stable complex. GrpE releases ADP from DnaK; ATP binding to DnaK triggers the release of the substrate protein, thus completing the reaction cycle. Several rounds of ATP-dependent interactions between DnaJ, DnaK and GrpE are required for fully efficient folding. Also involved, together with DnaK and GrpE, in the DNA replication of plasmids through activation of initiation proteins. This chain is Chaperone protein DnaJ, found in Prochlorococcus marinus (strain SARG / CCMP1375 / SS120).